The sequence spans 606 residues: Phosphomethylpyrimidine synthase (606 aa).

Residues 1–13 (MTTADARTPASKQ) show a composition bias toward polar residues. Disordered regions lie at residues 1–49 (MTTA…SRPD) and 105–147 (AGRP…DGRP). Low complexity predominate over residues 14–31 (NDGTPDGTTPDAGTPNDG). The segment covering 105–117 (AGRPVRPEDDGLK) has biased composition (basic and acidic residues). Residues asparagine 213, methionine 242, tyrosine 271, histidine 307, 327-329 (SRG), 368-371 (DGLR), and glutamate 407 contribute to the substrate site. Histidine 411 is a binding site for Zn(2+). Tyrosine 434 serves as a coordination point for substrate. Zn(2+) is bound at residue histidine 475. Cysteine 555, cysteine 558, and cysteine 563 together coordinate [4Fe-4S] cluster.

It belongs to the ThiC family. Requires [4Fe-4S] cluster as cofactor.

The enzyme catalyses 5-amino-1-(5-phospho-beta-D-ribosyl)imidazole + S-adenosyl-L-methionine = 4-amino-2-methyl-5-(phosphooxymethyl)pyrimidine + CO + 5'-deoxyadenosine + formate + L-methionine + 3 H(+). It participates in cofactor biosynthesis; thiamine diphosphate biosynthesis. Functionally, catalyzes the synthesis of the hydroxymethylpyrimidine phosphate (HMP-P) moiety of thiamine from aminoimidazole ribotide (AIR) in a radical S-adenosyl-L-methionine (SAM)-dependent reaction. This Streptomyces griseus subsp. griseus (strain JCM 4626 / CBS 651.72 / NBRC 13350 / KCC S-0626 / ISP 5235) protein is Phosphomethylpyrimidine synthase.